The primary structure comprises 289 residues: mRNA-capping enzyme small subunit (289 aa).

In terms of assembly, heterodimer of a large and a small subunit.

The protein localises to the virion. The enzyme catalyses a 5'-end (5'-triphosphoguanosine)-ribonucleoside in mRNA + S-adenosyl-L-methionine = a 5'-end (N(7)-methyl 5'-triphosphoguanosine)-ribonucleoside in mRNA + S-adenosyl-L-homocysteine. Functionally, catalyzes the last reaction in the mRNA cap formation pathway. In Fowlpox virus (strain NVSL) (FPV), this protein is mRNA-capping enzyme small subunit.